The following is a 421-amino-acid chain: Adenylosuccinate synthetase (421 aa).

GTP contacts are provided by residues 11-17 (GDEGKGK) and 39-41 (GHT). Catalysis depends on aspartate 12, which acts as the Proton acceptor. Residues aspartate 12 and glycine 39 each coordinate Mg(2+). IMP contacts are provided by residues 12 to 15 (DEGK), 37 to 40 (NAGH), threonine 124, arginine 138, glutamine 220, threonine 235, and arginine 299. Residue histidine 40 is the Proton donor of the active site. 295-301 (TTTGRPR) is a binding site for substrate. GTP is bound by residues arginine 301, 327 to 329 (KLD), and 409 to 411 (SVG).

It belongs to the adenylosuccinate synthetase family. In terms of assembly, homodimer. The cofactor is Mg(2+).

The protein localises to the cytoplasm. The enzyme catalyses IMP + L-aspartate + GTP = N(6)-(1,2-dicarboxyethyl)-AMP + GDP + phosphate + 2 H(+). The protein operates within purine metabolism; AMP biosynthesis via de novo pathway; AMP from IMP: step 1/2. Its function is as follows. Plays an important role in the de novo pathway of purine nucleotide biosynthesis. Catalyzes the first committed step in the biosynthesis of AMP from IMP. The chain is Adenylosuccinate synthetase from Methanothrix thermoacetophila (strain DSM 6194 / JCM 14653 / NBRC 101360 / PT) (Methanosaeta thermophila).